A 333-amino-acid polypeptide reads, in one-letter code: L-lactate dehydrogenase B chain (333 aa).

Residues 29–57 and R99 each bind NAD(+); that span reads GQVGMACAVSILMRELADELALVDVIEDK. Positions 106, 138, and 169 each coordinate substrate. Residue N138 coordinates NAD(+). The active-site Proton acceptor is H193. T248 provides a ligand contact to substrate.

It belongs to the LDH/MDH superfamily. LDH family. Homotetramer.

It localises to the cytoplasm. It carries out the reaction (S)-lactate + NAD(+) = pyruvate + NADH + H(+). Its pathway is fermentation; pyruvate fermentation to lactate; (S)-lactate from pyruvate: step 1/1. Interconverts simultaneously and stereospecifically pyruvate and lactate with concomitant interconversion of NADH and NAD(+). The chain is L-lactate dehydrogenase B chain (ldhb) from Anguilla rostrata (American eel).